A 432-amino-acid polypeptide reads, in one-letter code: 3-phosphoshikimate 1-carboxyvinyltransferase (432 aa).

The 3-phosphoshikimate site is built by Lys-25, Ser-26, and Arg-30. Position 25 (Lys-25) interacts with phosphoenolpyruvate. Phosphoenolpyruvate contacts are provided by Gly-97 and Arg-125. 3-phosphoshikimate-binding residues include Ser-170, Gln-172, Asp-318, and Lys-345. Gln-172 is a phosphoenolpyruvate binding site. The Proton acceptor role is filled by Asp-318. Positions 349 and 393 each coordinate phosphoenolpyruvate.

It belongs to the EPSP synthase family. In terms of assembly, monomer.

The protein resides in the cytoplasm. The catalysed reaction is 3-phosphoshikimate + phosphoenolpyruvate = 5-O-(1-carboxyvinyl)-3-phosphoshikimate + phosphate. The protein operates within metabolic intermediate biosynthesis; chorismate biosynthesis; chorismate from D-erythrose 4-phosphate and phosphoenolpyruvate: step 6/7. Functionally, catalyzes the transfer of the enolpyruvyl moiety of phosphoenolpyruvate (PEP) to the 5-hydroxyl of shikimate-3-phosphate (S3P) to produce enolpyruvyl shikimate-3-phosphate and inorganic phosphate. This is 3-phosphoshikimate 1-carboxyvinyltransferase from Geobacillus thermodenitrificans (strain NG80-2).